The primary structure comprises 328 residues: 2-oxoglutarate-dependent dioxygenase gloF (328 aa).

A Fe2OG dioxygenase domain is found at aspartate 175–proline 289. Fe cation-binding residues include histidine 201, aspartate 203, and histidine 261. Residue arginine 280 coordinates 2-oxoglutarate.

It belongs to the iron/ascorbate-dependent oxidoreductase family. Requires Fe(2+) as cofactor.

It participates in mycotoxin biosynthesis. Its function is as follows. 2-oxoglutarate-dependent dioxygenase; part of the gene cluster that mediates the biosynthesis of pneumocandins, lipohexapeptides of the echinocandin family that prevent fungal cell wall formation by non-competitive inhibition of beta-1,3-glucan synthase. The 10,12-dimethylmyristoyl side chain is synthesized by the reducing polyketide synthase gloL/GLPKS4. The thioesterase gloN/GLHYD exclusively interacts with gloL/GLPKS4 to maintain turnover of the polyketide side chain. The 10R,12S-dimethylmyristic acid is then transferred to the first thiolation domain of the nonribosomal peptide synthetase gloA/GLNRPS4 by the acyl-AMP ligase gloD/GLligase, followed by its acylation to L-ornithine to trigger elongation of the cyclic hexapeptide. L-ornithine, 4R-hydroxyl-L-proline (generated from L-proline by the dioxygenase gloF/GLOXY2), 3S-hydroxyl-L-homotyrosine (generated by gloG/GLHtyB, gloH/GLHtyA, gloI/GLHtyC, gloJ/GLHtyD and hydroxylated at C-3 by the dioxygenase gloM/GLOXY1), 3R-hydroxyl-L-glutamine (generated from L-glutamine probably by the dioxygenase gloE/GLOXY3) and 3S-hydroxyl-L-proline (generated from L-proline by the dioxygenase gloF/GLOXY2 to yield pneumocandin B0), or 3S-hydroxyl-4S-methyl-L-proline (generated from L-leucine by the dioxygenase gloC/GLOXY4 to yield pneumocandin A0) are sequentially added to the growing chain. The last C domain of gloA/GLNRPS4 is proposed to be responsible for cyclization by condensation to form the peptide bond between L-ornithine and 3S-hydroxyl-4S-methyl-L-proline (for pneumocandin A0) or 3S-hydroxyl-L-proline (for pneumocandin B0). Finally, the subsequent C-4 hydroxylation of 3S-hydroxyl-L-homotyrosine and L-ornithine dihydroxylation at C-4 and C-5 are performed by the cytochrome P450 monooxygenases gloP/GLP450-1 and gloO/GLP450-2, respectively. This is 2-oxoglutarate-dependent dioxygenase gloF from Glarea lozoyensis (strain ATCC 20868 / MF5171).